We begin with the raw amino-acid sequence, 352 residues long: DNA polymerase IV (352 aa).

The UmuC domain maps to 4–185; that stretch reads IIHVDMDCFF…LPLSKIPGVG (182 aa). Asp8 and Asp103 together coordinate Mg(2+). Glu104 is an active-site residue.

The protein belongs to the DNA polymerase type-Y family. In terms of assembly, monomer. Mg(2+) serves as cofactor.

Its subcellular location is the cytoplasm. The enzyme catalyses DNA(n) + a 2'-deoxyribonucleoside 5'-triphosphate = DNA(n+1) + diphosphate. Functionally, poorly processive, error-prone DNA polymerase involved in untargeted mutagenesis. Copies undamaged DNA at stalled replication forks, which arise in vivo from mismatched or misaligned primer ends. These misaligned primers can be extended by PolIV. Exhibits no 3'-5' exonuclease (proofreading) activity. May be involved in translesional synthesis, in conjunction with the beta clamp from PolIII. In Yersinia pestis bv. Antiqua (strain Antiqua), this protein is DNA polymerase IV.